The following is a 333-amino-acid chain: Nuclear egress protein 1 (333 aa).

The interval 45-64 (SRRYKSVSRSGPSMRVRSRT) is disordered. The segment at 128 to 251 (CLSLSGMGYH…YVIFPGKSVH (124 aa)) adopts a CCCH-type zinc-finger fold.

Belongs to the herpesviridae NEC1 protein family. In terms of assembly, forms a heterohexameric complex with NEC2. Interacts with capsid vertex specific component 2/CVC2; this interaction directs the capsid to the host inner nuclear membrane to initiate budding. In terms of processing, phosphorylated at serine residues in the N-terminus. This phosphorylation regulates the localization within the inner nuclear membrane.

It localises to the host nucleus inner membrane. In terms of biological role, plays an essential role in virion nuclear egress, the first step of virion release from infected cell. Within the host nucleus, NEC1 interacts with the newly formed capsid through the vertexes and directs it to the inner nuclear membrane by associating with NEC2. Induces the budding of the capsid at the inner nuclear membrane as well as its envelopment into the perinuclear space. There, the NEC1/NEC2 complex promotes the fusion of the enveloped capsid with the outer nuclear membrane and the subsequent release of the viral capsid into the cytoplasm where it will reach the secondary budding sites in the host Golgi or trans-Golgi network. This chain is Nuclear egress protein 1, found in Varicella-zoster virus (strain Dumas) (HHV-3).